Consider the following 363-residue polypeptide: Fructose-bisphosphate aldolase C (363 aa).

The substrate site is built by Arg56 and Lys147. Lys230 acts as the Schiff-base intermediate with dihydroxyacetone-P in catalysis.

The protein belongs to the class I fructose-bisphosphate aldolase family. As to quaternary structure, homotetramer. Expressed in brain but not in liver or muscle.

The enzyme catalyses beta-D-fructose 1,6-bisphosphate = D-glyceraldehyde 3-phosphate + dihydroxyacetone phosphate. It participates in carbohydrate degradation; glycolysis; D-glyceraldehyde 3-phosphate and glycerone phosphate from D-glucose: step 4/4. This Carassius auratus (Goldfish) protein is Fructose-bisphosphate aldolase C (aldoc).